Reading from the N-terminus, the 141-residue chain is Putative pre-16S rRNA nuclease (141 aa).

This sequence belongs to the YqgF nuclease family.

It is found in the cytoplasm. Its function is as follows. Could be a nuclease involved in processing of the 5'-end of pre-16S rRNA. This chain is Putative pre-16S rRNA nuclease, found in Coxiella burnetii (strain CbuG_Q212) (Coxiella burnetii (strain Q212)).